A 314-amino-acid polypeptide reads, in one-letter code: Olfactory receptor 5D14 (314 aa).

The Extracellular portion of the chain corresponds to 1-27 (MMMVLRNLSMEPTFALLGFTDYPKLQI). Asn-7 carries N-linked (GlcNAc...) asparagine glycosylation. The chain crosses the membrane as a helical span at residues 28-48 (PLFLVFLLMYVITVVGNLGMI). Topologically, residues 49-56 (IIIKINPK) are cytoplasmic. A helical transmembrane segment spans residues 57–77 (FHTPMYFFLSHLSFVDFCYSS). At 78 to 101 (IVTPKLLENLVMADKSIFYFSCMM) the chain is on the extracellular side. Residues 102 to 122 (QYFLSCTAVVTESFLLAVMAY) traverse the membrane as a helical segment. The Cytoplasmic portion of the chain corresponds to 123–141 (DRFVAICNPLLYTVAMSQR). The chain crosses the membrane as a helical span at residues 142–162 (LCALLVAGSYLWGMFGPLVLL). The Extracellular portion of the chain corresponds to 163-198 (CYALRLNFSGPNVINHFFCEYTALISVSGSDILIPH). Residue Asn-169 is glycosylated (N-linked (GlcNAc...) asparagine). A helical transmembrane segment spans residues 199–219 (LLLFSFATFNEMCTLLIILTS). Residues 220–239 (YVFIFVTVLKIRSVSGRHKA) are Cytoplasmic-facing. A helical membrane pass occupies residues 240–260 (FSTWASHLTSITIFHGTILFL). The Extracellular portion of the chain corresponds to 261 to 273 (YCVPNSKNSRQTV). The helical transmembrane segment at 274–294 (KVASVFYTVVNPMLNPLIYSL) threads the bilayer. Over 295-314 (RNKDVKDAFWKLIHTQVPFH) the chain is Cytoplasmic.

The protein belongs to the G-protein coupled receptor 1 family.

It is found in the cell membrane. Functionally, odorant receptor. This is Olfactory receptor 5D14 (OR5D14) from Homo sapiens (Human).